A 460-amino-acid chain; its full sequence is Methionine aminopeptidase 2-1 (460 aa).

The interval 1-90 (MGSKSPNGED…SAQAAQQTAP (90 aa)) is disordered. The span at 30 to 39 (SAAASGLLRG) shows a compositional bias: low complexity. Acidic residues predominate over residues 42 to 52 (EDQDEDGDDDE). Residues 69 to 81 (TKKRRRNNKKKKS) are compositionally biased toward basic residues. His212 contributes to the substrate binding site. 3 residues coordinate a divalent metal cation: Asp233, Asp244, and His313. Position 321 (His321) interacts with substrate. Positions 346 and 441 each coordinate a divalent metal cation.

This sequence belongs to the peptidase M24A family. Methionine aminopeptidase eukaryotic type 2 subfamily. The cofactor is Co(2+). Requires Zn(2+) as cofactor. It depends on Mn(2+) as a cofactor. Fe(2+) is required as a cofactor.

The protein resides in the cytoplasm. It catalyses the reaction Release of N-terminal amino acids, preferentially methionine, from peptides and arylamides.. In terms of biological role, cotranslationally removes the N-terminal methionine from nascent proteins. The N-terminal methionine is often cleaved when the second residue in the primary sequence is small and uncharged (Met-Ala-, Cys, Gly, Pro, Ser, Thr, or Val). The protein is Methionine aminopeptidase 2-1 of Leptosphaeria maculans (strain JN3 / isolate v23.1.3 / race Av1-4-5-6-7-8) (Blackleg fungus).